We begin with the raw amino-acid sequence, 457 residues long: G-protein coupled receptor 135 (457 aa).

Residues 1–27 form a disordered region; the sequence is MEEQARPPSRPAASATLPGSAHPGGAA. Over 1–64 the chain is Extracellular; the sequence is MEEQARPPSR…EAAGSRGPAP (64 aa). An N-linked (GlcNAc...) asparagine glycan is attached at Asn-47. A helical transmembrane segment spans residues 65–85; the sequence is LLWHGAAVAAQALVLLLIFLL. Residues 86–109 lie on the Cytoplasmic side of the membrane; that stretch reads SSLGNCAVMGVIVKHRQLRTVTNA. The helical transmembrane segment at 110–130 threads the bilayer; it reads FILSLSLSDLLTALLCLPAAF. The Extracellular segment spans residues 131 to 156; that stretch reads LDLFAPPGDSGPWRSFCAASRFFSSC. The chain crosses the membrane as a helical span at residues 157 to 177; the sequence is FGIVSTFSVALISLDRYCAIV. At 178-189 the chain is on the cytoplasmic side; it reads RPPRDKLGRRRA. A helical transmembrane segment spans residues 190-210; sequence LQLLAGAWLAALGFSLPWELL. Over 211 to 235 the chain is Extracellular; that stretch reads RAPREPPTPQSFHRCLYRTSPDPAQ. Residues 236–256 form a helical membrane-spanning segment; that stretch reads LGAAYSVGLVVACYLLPFLLM. Residues 257 to 295 are Cytoplasmic-facing; the sequence is CFCRYHICKTVRLSDVRVRPMTTYARVLRFFSEVRTATT. A helical membrane pass occupies residues 296–316; it reads VLIMIVFVICCWGPYCFLVLL. Residues 317-329 lie on the Extracellular side of the membrane; sequence AATRQGQTTQAPS. Residues 330-350 traverse the membrane as a helical segment; sequence LLNVAAVWLTWANGAINPVIY. Residues 351 to 457 lie on the Cytoplasmic side of the membrane; it reads AIRNPNISMF…HKSETRDSSI (107 aa).

This sequence belongs to the G-protein coupled receptor 1 family. Interacts with MTNR1B. Interacts with ARRB1 and ARRB2 in a spontaneous and agonist-independent manner; leading to the internalization of GPR135 in the endosomal compartment.

It is found in the cell membrane. It localises to the endosome membrane. Its function is as follows. Orphan receptor. Has spontaneous activity for beta-arrestin recruitment. Shows a reciprocal regulatory interaction with the melatonin receptor MTNR1B most likely through receptor heteromerization. The sequence is that of G-protein coupled receptor 135 (Gpr135) from Rattus norvegicus (Rat).